We begin with the raw amino-acid sequence, 265 residues long: Speedy protein E13 (265 aa).

The disordered stretch occupies residues 1–80 (MGQILGKIMM…EPEKELAPEP (80 aa)). A compositionally biased stretch (acidic residues) spans 66–80 (DESDDEPEKELAPEP).

Belongs to the Speedy/Ringo family.

The chain is Speedy protein E13 from Homo sapiens (Human).